The sequence spans 232 residues: MGQKINPIGLRLGINRTWDSRWFAGKNEYGKLLHEDVKIREILHKELKQAAVARIVIERPHKKCRVTIHSARPGVVIGKKGADIDKLRKKVADITASDVVINIVEIRKPELDATLVAESIAQQLERRVAFRRAMKRAVQSAMRLGAEGIRINCSGRLGGAEIARMEWYREGRVPLHTLRADIDYGVATAFTTFGTCGVKVWIFKGEILEHDPMAQDKRMAEGDNSRPRRDAA.

A KH type-2 domain is found at 39-107; that stretch reads IREILHKELK…DVVINIVEIR (69 aa).

This sequence belongs to the universal ribosomal protein uS3 family. As to quaternary structure, part of the 30S ribosomal subunit. Forms a tight complex with proteins S10 and S14.

Its function is as follows. Binds the lower part of the 30S subunit head. Binds mRNA in the 70S ribosome, positioning it for translation. The polypeptide is Small ribosomal subunit protein uS3 (Rhodopseudomonas palustris (strain HaA2)).